Here is a 427-residue protein sequence, read N- to C-terminus: Peptidase B (427 aa).

Positions 195 and 200 each coordinate Mn(2+). The active site involves Lys207. 3 residues coordinate Mn(2+): Asp218, Asp277, and Glu279. Residue Arg281 is part of the active site.

The protein belongs to the peptidase M17 family. In terms of assembly, homohexamer. Requires Mn(2+) as cofactor.

It localises to the cytoplasm. It catalyses the reaction Release of an N-terminal amino acid, Xaa, from a peptide or arylamide. Xaa is preferably Glu or Asp but may be other amino acids, including Leu, Met, His, Cys and Gln.. In terms of biological role, probably plays an important role in intracellular peptide degradation. The polypeptide is Peptidase B (Escherichia coli (strain UTI89 / UPEC)).